The following is a 277-amino-acid chain: Diaminopimelate epimerase (277 aa).

2 residues coordinate substrate: Asn11 and Asn65. Cys74 serves as the catalytic Proton donor. Substrate contacts are provided by residues 75–76 (GN), Asn180, and 198–199 (ER). The Proton acceptor role is filled by Cys208. 209-210 (GT) is a binding site for substrate.

This sequence belongs to the diaminopimelate epimerase family. In terms of assembly, homodimer.

It localises to the cytoplasm. The catalysed reaction is (2S,6S)-2,6-diaminopimelate = meso-2,6-diaminopimelate. The protein operates within amino-acid biosynthesis; L-lysine biosynthesis via DAP pathway; DL-2,6-diaminopimelate from LL-2,6-diaminopimelate: step 1/1. Catalyzes the stereoinversion of LL-2,6-diaminopimelate (L,L-DAP) to meso-diaminopimelate (meso-DAP), a precursor of L-lysine and an essential component of the bacterial peptidoglycan. This Gemmatimonas aurantiaca (strain DSM 14586 / JCM 11422 / NBRC 100505 / T-27) protein is Diaminopimelate epimerase.